Here is a 456-residue protein sequence, read N- to C-terminus: Trigger factor (456 aa).

Positions 166-245 (GDYANIDLNA…VNSVKAEELP (80 aa)) constitute a PPIase FKBP-type domain.

Belongs to the FKBP-type PPIase family. Tig subfamily.

It is found in the cytoplasm. The catalysed reaction is [protein]-peptidylproline (omega=180) = [protein]-peptidylproline (omega=0). Its function is as follows. Involved in protein export. Acts as a chaperone by maintaining the newly synthesized protein in an open conformation. Functions as a peptidyl-prolyl cis-trans isomerase. The protein is Trigger factor of Bifidobacterium adolescentis (strain ATCC 15703 / DSM 20083 / NCTC 11814 / E194a).